The following is a 323-amino-acid chain: HTH-type transcriptional activator CmpR (323 aa).

In terms of domain architecture, HTH lysR-type spans 4–61 (LTLHQLKVFEAAARHSSFTRAAEELYLTQPTVSIQVKQLTKAVGLPLFEQIGKRLYLT). A DNA-binding region (H-T-H motif) is located at residues 21 to 40 (FTRAAEELYLTQPTVSIQVK). Residues 304–323 (IPESTTTDPELDAPQPVVGV) form a disordered region.

This sequence belongs to the LysR transcriptional regulatory family.

It localises to the cytoplasm. Activates transcription of the cmpABCD operon under carbon dioxide-limited conditions. The polypeptide is HTH-type transcriptional activator CmpR (cmpR) (Synechococcus elongatus (strain ATCC 33912 / PCC 7942 / FACHB-805) (Anacystis nidulans R2)).